Here is a 967-residue protein sequence, read N- to C-terminus: Sodium/potassium exporting P-type ATPase 1 (967 aa).

The Cytoplasmic portion of the chain corresponds to 1–70; that stretch reads MEGSGDKRHE…GVNPWKILLR (70 aa). Residues 71–91 traverse the membrane as a helical segment; the sequence is QVSNGLTAVLVVAMVVSFAVK. A topological domain (extracellular) is located at residue aspartate 92. The chain crosses the membrane as a helical span at residues 93 to 113; the sequence is YAEAGVLVIVIAFNTIVGFVQ. Over 114 to 254 the chain is Cytoplasmic; that stretch reads EYRAEKTMDA…TQSTPMQRKL (141 aa). The helical transmembrane segment at 255-275 threads the bilayer; that stretch reads NLMAYMLLAFALLLALIVFAV. Topologically, residues 276–283 are extracellular; sequence NKFNFSTE. Asparagine 279 is a glycosylation site (N-linked (GlcNAc...) asparagine). The helical transmembrane segment at 284-304 threads the bilayer; that stretch reads VVIYAIALSIAIIPEGLIAVI. The Cytoplasmic portion of the chain corresponds to 305–732; that stretch reads TIVQALGVRR…GRRIFSNIKK (428 aa). The 4-aspartylphosphate intermediate role is filled by aspartate 340. The Mg(2+) site is built by aspartate 340 and threonine 342. Residues threonine 342, glutamate 425, lysine 478, arginine 523, threonine 587, glycine 588, aspartate 589, arginine 651, and lysine 657 each coordinate ATP. Position 676 (aspartate 676) interacts with Mg(2+). Position 679 (asparagine 679) interacts with ATP. A helical transmembrane segment spans residues 733–753; sequence FVLHLLSTNVGQVIVLLIGLA. The Extracellular segment spans residues 754–812; the sequence is FKDRTGTSVFPLSPVQILFLNLVTGTPPAMALGIEPASSSVMQVPPHVKGLFTVELIMD. Residues 813–833 traverse the membrane as a helical segment; sequence IFIFGTFIGILALASWVLVIY. Residues 834 to 900 are Cytoplasmic-facing; the sequence is PFGNSDLATL…GGASRFFSNK (67 aa). The chain crosses the membrane as a helical span at residues 901 to 921; the sequence is VLVASVFIGALLPIPTIYIGT. The Extracellular portion of the chain corresponds to 922-931; it reads LNTEVFKQEG. Residues 932–952 traverse the membrane as a helical segment; that stretch reads ITWEWIIVIVSVFVFFLLSEF. Residues 953-967 are Cytoplasmic-facing; sequence YKLLKRRFIKTPYNM.

It belongs to the cation transport ATPase (P-type) (TC 3.A.3) family. Type IID subfamily. Mg(2+) is required as a cofactor. The active site is phosphorylated in presence of sodium or potassium and in conditions of higher pH. Not phosphorylated in presence of calcium ions.

It is found in the cell membrane. It catalyses the reaction Na(+)(in) + ATP + H2O = Na(+)(out) + ADP + phosphate + H(+). It carries out the reaction K(+)(in) + ATP + H2O = K(+)(out) + ADP + phosphate + H(+). Its function is as follows. Catalyzes the hydrolysis of ATP coupled with the export of sodium and potassium from the cell. May pump potassium inefficiently. May transport other cations such as lithium. Sodium/potassium efflux ATPases are involved in salt tolerance and maintaining the membrane potential across the plasma membrane in high salinity (Na+) or alkaline (K+) environments. This chain is Sodium/potassium exporting P-type ATPase 1, found in Physcomitrium patens (Spreading-leaved earth moss).